The following is a 194-amino-acid chain: 3-isopropylmalate dehydratase small subunit (194 aa).

Belongs to the LeuD family. LeuD type 1 subfamily. In terms of assembly, heterodimer of LeuC and LeuD.

The catalysed reaction is (2R,3S)-3-isopropylmalate = (2S)-2-isopropylmalate. Its pathway is amino-acid biosynthesis; L-leucine biosynthesis; L-leucine from 3-methyl-2-oxobutanoate: step 2/4. Its function is as follows. Catalyzes the isomerization between 2-isopropylmalate and 3-isopropylmalate, via the formation of 2-isopropylmaleate. This is 3-isopropylmalate dehydratase small subunit from Bacillus cereus (strain ATCC 14579 / DSM 31 / CCUG 7414 / JCM 2152 / NBRC 15305 / NCIMB 9373 / NCTC 2599 / NRRL B-3711).